Consider the following 818-residue polypeptide: Fibrous sheath CABYR-binding protein (818 aa).

A disordered region spans residues 1 to 61; sequence MEEKDESEQS…PKAALSIGNI (61 aa). Residues serine 25, serine 57, and serine 182 each carry the phosphoserine modification. Disordered regions lie at residues 195–727 and 773–805; these read SFSK…PFIT and LESG…NEGV. Composition is skewed to low complexity over residues 490-511, 544-560, and 697-715; these read SPPA…PAEE, EAPA…PAEE, and AELQ…VSVE. Residues 773–794 are compositionally biased toward basic and acidic residues; that stretch reads LESGNLDDKPKSEEPLERDTIP.

In terms of assembly, interacts with CABYR. Interacts with ROPN1 and ROPN1L; the interaction increases upon spermatozoa capacitation conditions. Post-translationally, phosphorylated by PKA upon spermatozoa capacitation conditions.

It localises to the cell projection. Its subcellular location is the cilium. The protein localises to the flagellum. Its function is as follows. May be involved in the later stages of fibrous sheath biogenesis and spermatozoa capacitation. Inhibits ROPN1 and ROPN1L SUMOylation. Binds calcium. The polypeptide is Fibrous sheath CABYR-binding protein (Bos taurus (Bovine)).